The following is a 414-amino-acid chain: METKNKKKVVLAYSGGLDTSVILKWLEETYGYEVIAACVNVGQTEDFAAIKKKALATGASKAYIVDVTEEFITDYIFPTLKAGAVYEDDYLLGTSFARPLISKKLVEIAEKEGAVAIAHGATGKGNDQVRFEATIKALNPNLKIIAPWRTWDLKSREDCIDYAVQHGIPIPVTKKDIYSRDENIWHISHEGGNLENPWNEHDDTIYKLSVSPEKSPDTPTYVELEFYKGIPVAVDGVKYEPIDMLTTLNKLGGAHGVGIIDIVENRLVGMKSRGVYETPGGTLLFAAHKALEKLTLDRDTTSFKKGISVKYAQLVYDGLWHTPLKDALDQFVNSTQEFVTGQVKLKLYKGNCTAVASASPFSLYNEDFVTFGEDHVYNQQDAEGFINLFALPLTIRALMLEEKLQGEAKEKKII.

12–20 (AYSGGLDTS) provides a ligand contact to ATP. The L-citrulline site is built by Tyr-90 and Ser-95. Gly-120 contacts ATP. 3 residues coordinate L-aspartate: Thr-122, Asn-126, and Asp-127. Asn-126 lines the L-citrulline pocket. Arg-130, Ser-179, Ser-188, Glu-264, and Tyr-276 together coordinate L-citrulline.

It belongs to the argininosuccinate synthase family. Type 1 subfamily. Homotetramer.

Its subcellular location is the cytoplasm. The catalysed reaction is L-citrulline + L-aspartate + ATP = 2-(N(omega)-L-arginino)succinate + AMP + diphosphate + H(+). It functions in the pathway amino-acid biosynthesis; L-arginine biosynthesis; L-arginine from L-ornithine and carbamoyl phosphate: step 2/3. The polypeptide is Argininosuccinate synthase (Alkaliphilus metalliredigens (strain QYMF)).